A 622-amino-acid chain; its full sequence is Chaperone protein HscA homolog (622 aa).

This sequence belongs to the heat shock protein 70 family.

In terms of biological role, chaperone involved in the maturation of iron-sulfur cluster-containing proteins. Has a low intrinsic ATPase activity which is markedly stimulated by HscB. The polypeptide is Chaperone protein HscA homolog (Burkholderia orbicola (strain MC0-3)).